The chain runs to 1405 residues: DNA-directed RNA polymerase subunit beta' (1405 aa).

Zn(2+)-binding residues include C70, C72, C85, and C88. Mg(2+) is bound by residues D460, D462, and D464. Zn(2+) is bound by residues C815, C890, C897, and C900.

This sequence belongs to the RNA polymerase beta' chain family. As to quaternary structure, the RNAP catalytic core consists of 2 alpha, 1 beta, 1 beta' and 1 omega subunit. When a sigma factor is associated with the core the holoenzyme is formed, which can initiate transcription. It depends on Mg(2+) as a cofactor. Zn(2+) serves as cofactor.

The catalysed reaction is RNA(n) + a ribonucleoside 5'-triphosphate = RNA(n+1) + diphosphate. Its function is as follows. DNA-dependent RNA polymerase catalyzes the transcription of DNA into RNA using the four ribonucleoside triphosphates as substrates. The protein is DNA-directed RNA polymerase subunit beta' of Xanthomonas campestris pv. campestris (strain B100).